The following is a 391-amino-acid chain: S-adenosylmethionine synthase 5 (391 aa).

E9 contacts Mg(2+). Position 15 (H15) interacts with ATP. E43 serves as a coordination point for K(+). L-methionine contacts are provided by E56 and Q99. Residues 167 to 169 (DGK), 235 to 238 (SGRF), D246, 252 to 253 (RK), A269, K273, and K277 contribute to the ATP site. D246 serves as a coordination point for L-methionine. K277 provides a ligand contact to L-methionine.

It belongs to the AdoMet synthase family. Homotetramer. The cofactor is Mn(2+). Mg(2+) serves as cofactor. Co(2+) is required as a cofactor. It depends on K(+) as a cofactor.

The protein resides in the cytoplasm. It carries out the reaction L-methionine + ATP + H2O = S-adenosyl-L-methionine + phosphate + diphosphate. Its pathway is amino-acid biosynthesis; S-adenosyl-L-methionine biosynthesis; S-adenosyl-L-methionine from L-methionine: step 1/1. Catalyzes the formation of S-adenosylmethionine from methionine and ATP. The reaction comprises two steps that are both catalyzed by the same enzyme: formation of S-adenosylmethionine (AdoMet) and triphosphate, and subsequent hydrolysis of the triphosphate. The chain is S-adenosylmethionine synthase 5 (METK5) from Vitis vinifera (Grape).